Consider the following 405-residue polypeptide: Arginine biosynthesis bifunctional protein ArgJ (405 aa).

Substrate-binding residues include Thr-152, Lys-178, Thr-189, Glu-276, Asn-400, and Thr-405. Catalysis depends on Thr-189, which acts as the Nucleophile.

It belongs to the ArgJ family. As to quaternary structure, heterotetramer of two alpha and two beta chains.

The protein localises to the cytoplasm. The catalysed reaction is N(2)-acetyl-L-ornithine + L-glutamate = N-acetyl-L-glutamate + L-ornithine. It carries out the reaction L-glutamate + acetyl-CoA = N-acetyl-L-glutamate + CoA + H(+). The protein operates within amino-acid biosynthesis; L-arginine biosynthesis; L-ornithine and N-acetyl-L-glutamate from L-glutamate and N(2)-acetyl-L-ornithine (cyclic): step 1/1. It participates in amino-acid biosynthesis; L-arginine biosynthesis; N(2)-acetyl-L-ornithine from L-glutamate: step 1/4. Functionally, catalyzes two activities which are involved in the cyclic version of arginine biosynthesis: the synthesis of N-acetylglutamate from glutamate and acetyl-CoA as the acetyl donor, and of ornithine by transacetylation between N(2)-acetylornithine and glutamate. The chain is Arginine biosynthesis bifunctional protein ArgJ from Pseudomonas savastanoi pv. phaseolicola (strain 1448A / Race 6) (Pseudomonas syringae pv. phaseolicola (strain 1448A / Race 6)).